The chain runs to 326 residues: uncharacterized protein (326 aa).

The protein belongs to the ParB family.

This is an uncharacterized protein from Acidianus two-tailed virus (ATV).